The chain runs to 367 residues: 3-dehydroquinate synthase (367 aa).

NAD(+)-binding positions include 69-74 (DGEAFK), 103-107 (GVIGD), 127-128 (TT), Lys140, and Lys149. Zn(2+) is bound by residues Glu182, His245, and His262.

The protein belongs to the sugar phosphate cyclases superfamily. Dehydroquinate synthase family. NAD(+) serves as cofactor. The cofactor is Co(2+). It depends on Zn(2+) as a cofactor.

It localises to the cytoplasm. It catalyses the reaction 7-phospho-2-dehydro-3-deoxy-D-arabino-heptonate = 3-dehydroquinate + phosphate. Its pathway is metabolic intermediate biosynthesis; chorismate biosynthesis; chorismate from D-erythrose 4-phosphate and phosphoenolpyruvate: step 2/7. Its function is as follows. Catalyzes the conversion of 3-deoxy-D-arabino-heptulosonate 7-phosphate (DAHP) to dehydroquinate (DHQ). The protein is 3-dehydroquinate synthase of Pseudomonas syringae pv. tomato (strain ATCC BAA-871 / DC3000).